A 264-amino-acid polypeptide reads, in one-letter code: Sexual differentiation protein ste4 (264 aa).

The SAM domain maps to W11–Q73. The segment at L111–L139 is leucine-zipper. The region spanning G176–C264 is the Ras-associating domain.

As to quaternary structure, homodimer or heterodimer with another leucine-zipper protein.

In terms of biological role, essential for mating and meiosis. The sequence is that of Sexual differentiation protein ste4 (ste4) from Schizosaccharomyces pombe (strain 972 / ATCC 24843) (Fission yeast).